The sequence spans 73 residues: Probable minor pilin MMP0528 (73 aa).

Positions 1–10 (MLKKLYSKKG) are excised as a propeptide. Residues 11-19 (QVSMEMGIL) carry the QXSXEXXXL motif.

The N-terminus is probably cleaved by the prepilin peptidase EppA, which recognizes the class III signal sequence.

Its subcellular location is the secreted. The protein localises to the cell surface. It is found in the fimbrium. This chain is Probable minor pilin MMP0528, found in Methanococcus maripaludis (strain DSM 14266 / JCM 13030 / NBRC 101832 / S2 / LL).